Reading from the N-terminus, the 23-residue chain is ALWKNMLKGIGKLAGKAALGAVK.

As to expression, expressed by the skin glands.

The protein resides in the secreted. Its function is as follows. Possesses a potent antimicrobial activity against bacteria, fungi and protozoa. Probably acts by disturbing membrane functions with its amphipathic structure. This chain is Dermaseptin III-like peptide, found in Phyllomedusa burmeisteri (Brazilian common walking leaf frog).